Reading from the N-terminus, the 527-residue chain is Aspartokinase (527 aa).

The residue at position 333 (Thr333) is a Phosphothreonine. Residues 442–527 (LVGKHMKQYI…RLEQLKRLGI (86 aa)) enclose the ACT domain.

The protein belongs to the aspartokinase family. In terms of assembly, homohexamer. Interacts with FPR1; the interaction is direct, plays a role in feedback inhibition of aspartokinase by threonine, and inhibited by tacrolimus and sirolimus.

It catalyses the reaction L-aspartate + ATP = 4-phospho-L-aspartate + ADP. It participates in amino-acid biosynthesis; L-methionine biosynthesis via de novo pathway; L-homoserine from L-aspartate: step 1/3. The protein operates within amino-acid biosynthesis; L-threonine biosynthesis; L-threonine from L-aspartate: step 1/5. Its activity is regulated as follows. Allosterically inhibited by threonine. Its function is as follows. Phosphorylates aspartate, the first step in the biosynthesis of amino acids that derive from aspartate (the aspartate family of amino acids), including methioinine and threonine, the latter of which is a precursor to isoleucine. In Saccharomyces cerevisiae (strain ATCC 204508 / S288c) (Baker's yeast), this protein is Aspartokinase (HOM3).